Consider the following 240-residue polypeptide: tRNA (guanine-N(1)-)-methyltransferase (240 aa).

Residues Gly-108 and 127 to 132 (IGDYVL) contribute to the S-adenosyl-L-methionine site.

Belongs to the RNA methyltransferase TrmD family. In terms of assembly, homodimer.

It is found in the cytoplasm. It carries out the reaction guanosine(37) in tRNA + S-adenosyl-L-methionine = N(1)-methylguanosine(37) in tRNA + S-adenosyl-L-homocysteine + H(+). Functionally, specifically methylates guanosine-37 in various tRNAs. This Lactobacillus johnsonii (strain CNCM I-12250 / La1 / NCC 533) protein is tRNA (guanine-N(1)-)-methyltransferase.